The sequence spans 301 residues: Fatty acid elongase 3 (301 aa).

Helical transmembrane passes span 31-51, 64-84, 122-142, 161-181, 187-207, 219-239, and 257-277; these read VPYI…KSIM, IVWN…TVPY, ALAD…LFAL, VIFL…FAYV, GLWF…YYFV, FAPI…IVVC, and FSLH…SQLF. Positions 165 to 169 match the HxxHH motif motif; that stretch reads HWYHH. Catalysis depends on His-168, which acts as the Nucleophile.

The protein belongs to the ELO family.

The protein resides in the endoplasmic reticulum membrane. It catalyses the reaction an acyl-CoA + malonyl-CoA + H(+) = a 3-oxoacyl-CoA + CO2 + CoA. It participates in lipid metabolism; fatty acid biosynthesis. Involved in the synthesis of fatty acids. Elongates C14 fatty acids to C18. The chain is Fatty acid elongase 3 from Trypanosoma brucei brucei (strain 927/4 GUTat10.1).